The following is a 570-amino-acid chain: A-type ATP synthase subunit A (570 aa).

223 to 230 (GPFGSGKT) is a binding site for ATP.

Belongs to the ATPase alpha/beta chains family. In terms of assembly, has multiple subunits with at least A(3), B(3), C, D, E, F, H, I and proteolipid K(x).

Its subcellular location is the cell membrane. It carries out the reaction ATP + H2O + 4 H(+)(in) = ADP + phosphate + 5 H(+)(out). Its function is as follows. Component of the A-type ATP synthase that produces ATP from ADP in the presence of a proton gradient across the membrane. The A chain is the catalytic subunit. The protein is A-type ATP synthase subunit A of Nanoarchaeum equitans (strain Kin4-M).